Consider the following 238-residue polypeptide: Ribonuclease PH (238 aa).

Phosphate contacts are provided by residues arginine 86 and 124–126 (GTR).

The protein belongs to the RNase PH family. Homohexameric ring arranged as a trimer of dimers.

It catalyses the reaction tRNA(n+1) + phosphate = tRNA(n) + a ribonucleoside 5'-diphosphate. In terms of biological role, phosphorolytic 3'-5' exoribonuclease that plays an important role in tRNA 3'-end maturation. Removes nucleotide residues following the 3'-CCA terminus of tRNAs; can also add nucleotides to the ends of RNA molecules by using nucleoside diphosphates as substrates, but this may not be physiologically important. Probably plays a role in initiation of 16S rRNA degradation (leading to ribosome degradation) during starvation. This chain is Ribonuclease PH, found in Chromobacterium violaceum (strain ATCC 12472 / DSM 30191 / JCM 1249 / CCUG 213 / NBRC 12614 / NCIMB 9131 / NCTC 9757 / MK).